Reading from the N-terminus, the 249-residue chain is tRNA 2'-phosphotransferase 1 (249 aa).

Residue Met-1 is modified to N-acetylmethionine. 2 disordered regions span residues 1-25 and 220-249; these read MNAP…RNVQ and KPLS…KIQQ.

It belongs to the KptA/TPT1 family.

It catalyses the reaction 2'-phospho-[ligated tRNA] + NAD(+) = mature tRNA + ADP-alpha-D-ribose 1'',2''-cyclic phosphate + nicotinamide. Catalyzes the last step of tRNA splicing, the transfer of the splice junction 2'-phosphate from ligated tRNA to NAD to produce ADP-ribose 1''-2'' cyclic phosphate. This chain is tRNA 2'-phosphotransferase 1 (Trpt1), found in Mus musculus (Mouse).